We begin with the raw amino-acid sequence, 125 residues long: Photoactive yellow protein (125 aa).

A PAS domain is found at leucine 23–glycine 86. Cysteine 69 is modified (S-(4-hydroxycinnamyl)cysteine).

The protein belongs to the photoactive yellow protein family. In terms of assembly, monomer. Post-translationally, the 4-hydroxycinnamic acid (p-coumaric acid) chromophore is covalently bound via a thioester linkage.

Its function is as follows. Photoactive blue light protein. Probably functions as a photoreceptor for a negative phototaxis response. The protein is Photoactive yellow protein (pyp) of Halorhodospira halophila (Ectothiorhodospira halophila).